The sequence spans 444 residues: Methylenetetrahydrofolate--tRNA-(uracil-5-)-methyltransferase TrmFO (444 aa).

10-15 (GAGLAG) contributes to the FAD binding site.

This sequence belongs to the MnmG family. TrmFO subfamily. Requires FAD as cofactor.

It is found in the cytoplasm. The catalysed reaction is uridine(54) in tRNA + (6R)-5,10-methylene-5,6,7,8-tetrahydrofolate + NADH + H(+) = 5-methyluridine(54) in tRNA + (6S)-5,6,7,8-tetrahydrofolate + NAD(+). It carries out the reaction uridine(54) in tRNA + (6R)-5,10-methylene-5,6,7,8-tetrahydrofolate + NADPH + H(+) = 5-methyluridine(54) in tRNA + (6S)-5,6,7,8-tetrahydrofolate + NADP(+). Its function is as follows. Catalyzes the folate-dependent formation of 5-methyl-uridine at position 54 (M-5-U54) in all tRNAs. This Streptococcus sanguinis (strain SK36) protein is Methylenetetrahydrofolate--tRNA-(uracil-5-)-methyltransferase TrmFO.